The following is a 47-amino-acid chain: Light-harvesting protein B800/850/890 alpha-2 chain (47 aa).

At 1-12 (MWRMWKILDYRR) the chain is on the cytoplasmic side. A helical transmembrane segment spans residues 13 to 33 (TVVLAHVGMAVLALLIHFILL). His29 contacts a bacteriochlorophyll. The Periplasmic segment spans residues 34-47 (STESFNWLEGNPYG).

Belongs to the antenna complex alpha subunit family. As to quaternary structure, the core complex is formed by different alpha and beta chains, binding bacteriochlorophyll molecules, and arranged most probably in tetrameric structures disposed around the reaction center. The non-pigmented gamma chains may constitute additional components.

Its subcellular location is the cell inner membrane. Its function is as follows. Antenna complexes are light-harvesting systems, which transfer the excitation energy to the reaction centers. This is Light-harvesting protein B800/850/890 alpha-2 chain from Halorhodospira halophila (strain DSM 244 / SL1) (Ectothiorhodospira halophila (strain DSM 244 / SL1)).